The following is a 558-amino-acid chain: Dihydroxy-acid dehydratase (558 aa).

Residue Asp78 coordinates Mg(2+). Position 119 (Cys119) interacts with [2Fe-2S] cluster. Residues Asp120 and Lys121 each coordinate Mg(2+). Lys121 carries the post-translational modification N6-carboxylysine. Residue Cys191 participates in [2Fe-2S] cluster binding. Glu443 contributes to the Mg(2+) binding site. Catalysis depends on Ser469, which acts as the Proton acceptor.

It belongs to the IlvD/Edd family. In terms of assembly, homodimer. The cofactor is [2Fe-2S] cluster. Mg(2+) serves as cofactor.

It catalyses the reaction (2R)-2,3-dihydroxy-3-methylbutanoate = 3-methyl-2-oxobutanoate + H2O. The enzyme catalyses (2R,3R)-2,3-dihydroxy-3-methylpentanoate = (S)-3-methyl-2-oxopentanoate + H2O. It participates in amino-acid biosynthesis; L-isoleucine biosynthesis; L-isoleucine from 2-oxobutanoate: step 3/4. The protein operates within amino-acid biosynthesis; L-valine biosynthesis; L-valine from pyruvate: step 3/4. Functions in the biosynthesis of branched-chain amino acids. Catalyzes the dehydration of (2R,3R)-2,3-dihydroxy-3-methylpentanoate (2,3-dihydroxy-3-methylvalerate) into 2-oxo-3-methylpentanoate (2-oxo-3-methylvalerate) and of (2R)-2,3-dihydroxy-3-methylbutanoate (2,3-dihydroxyisovalerate) into 2-oxo-3-methylbutanoate (2-oxoisovalerate), the penultimate precursor to L-isoleucine and L-valine, respectively. The sequence is that of Dihydroxy-acid dehydratase from Solidesulfovibrio magneticus (strain ATCC 700980 / DSM 13731 / RS-1) (Desulfovibrio magneticus).